A 94-amino-acid chain; its full sequence is Co-chaperonin GroES (94 aa).

Belongs to the GroES chaperonin family. In terms of assembly, heptamer of 7 subunits arranged in a ring. Interacts with the chaperonin GroEL.

It is found in the cytoplasm. Together with the chaperonin GroEL, plays an essential role in assisting protein folding. The GroEL-GroES system forms a nano-cage that allows encapsulation of the non-native substrate proteins and provides a physical environment optimized to promote and accelerate protein folding. GroES binds to the apical surface of the GroEL ring, thereby capping the opening of the GroEL channel. This is Co-chaperonin GroES from Staphylococcus epidermidis.